A 508-amino-acid polypeptide reads, in one-letter code: DNA-directed RNA polymerase subunit alpha (508 aa).

The tract at residues 1 to 380 (MKHILLSCVE…HLFSPFLQTH (380 aa)) is alpha N-terminal domain (alpha-NTD). Residues 434–508 (NLVTAIQTLD…LKNFGVLPTS (75 aa)) are alpha C-terminal domain (alpha-CTD).

This sequence belongs to the RNA polymerase alpha chain family. In plastids the minimal PEP RNA polymerase catalytic core is composed of four subunits: alpha, beta, beta', and beta''. When a (nuclear-encoded) sigma factor is associated with the core the holoenzyme is formed, which can initiate transcription.

It localises to the plastid. The protein localises to the chloroplast. The catalysed reaction is RNA(n) + a ribonucleoside 5'-triphosphate = RNA(n+1) + diphosphate. Its function is as follows. DNA-dependent RNA polymerase catalyzes the transcription of DNA into RNA using the four ribonucleoside triphosphates as substrates. The protein is DNA-directed RNA polymerase subunit alpha (rpoA) of Oltmannsiellopsis viridis (Marine flagellate).